Consider the following 411-residue polypeptide: MAATATMATSGSARKRLLKEEDMTKVEFETSEEVDVTPTFDTMGLREDLLRGIYAYGFEKPSAIQQRAIKQIIKGRDVIAQSQSGTGKTATFSISVLQCLDIQVRETQALILAPTRELAVQIQKGLLALGDYMNVQCHACIGGTNVGEDIRKLDYGQHVVAGTPGRVFDMIRRRSLRTRAIKMLVLDEADEMLNKGFKEQIYDVYRYLPPATQVVLISATLPHEILEMTNKFMTDPIRILVKRDELTLEGIKQFFVAVEREEWKFDTLCDLYDTLTITQAVIFCNTKRKVDWLTEKMREANFTVSSMHGDMPQKERESIMKEFRSGASRVLISTDVWARGLDVPQVSLIINYDLPNNRELYIHRIGRSGRYGRKGVAINFVKNDDIRILRDIEQYYSTQIDEMPMNVADLI.

Met1 is subject to N-acetylmethionine. Ala2 bears the N-acetylalanine; in Eukaryotic initiation factor 4A-III, N-terminally processed mark. Ser10 and Ser12 each carry phosphoserine. Residue Lys19 forms a Glycyl lysine isopeptide (Lys-Gly) (interchain with G-Cter in SUMO2) linkage. Residues 38 to 66 (PTFDTMGLREDLLRGIYAYGFEKPSAIQQ) carry the Q motif motif. ATP contacts are provided by residues Lys60, Gln65, and 85 to 90 (GTGKTA). The region spanning 69–239 (IKQIIKGRDV…NKFMTDPIRI (171 aa)) is the Helicase ATP-binding domain. The residue at position 124 (Lys124) is an N6-acetyllysine. Lys152 is covalently cross-linked (Glycyl lysine isopeptide (Lys-Gly) (interchain with G-Cter in SUMO2)). A Phosphothreonine modification is found at Thr163. A DEAD box motif is present at residues 187–190 (DEAD). N6-acetyllysine occurs at positions 198 and 296. The Helicase C-terminal domain occupies 250–411 (GIKQFFVAVE…EMPMNVADLI (162 aa)). Lys314 participates in a covalent cross-link: Glycyl lysine isopeptide (Lys-Gly) (interchain with G-Cter in SUMO2). Lys321 is subject to N6-acetyllysine. ATP is bound by residues Asp342 and 367 to 371 (RSGRY). Glycyl lysine isopeptide (Lys-Gly) (interchain with G-Cter in SUMO2) cross-links involve residues Lys374 and Lys382.

This sequence belongs to the DEAD box helicase family. eIF4A subfamily. As to quaternary structure, identified in the spliceosome C complex. Core component of the mRNA splicing-dependent exon junction complex (EJC); the core complex contains CASC3, EIF4A3, MAGOH or MAGOHB, and RBM8A. Interacts with CASC3, MAGOH, NXF1, RBM8A and ALYREF/THOC4. Component of the ALYREF/THOC4-EJC-RNA complex; in the complex interacts with MAGOH, RBM8A and THOC4 (via the WXHD motif); these interactions are likely specific to RNA-bound EJC. May interact with NOM1. Interacts with POLDIP3. Interacts with CWC22 and PRPF19 in an RNA-independent manner. Direct interaction with CWC22 is mediated by the helicase C-terminal domain. Full interaction with CWC22 occurs only when EIF4A3 is not part of the EJC and prevents EIF4A3 binding to RNA. Identified in a complex composed of the EJC core, UPF3B and UPF2. The EJC core can also interact with UPF3A (in vitro). Interacts with NCBP3. Interacts with NRDE2. Interacts with DHX34; the interaction is RNA-independent.

Its subcellular location is the nucleus. It is found in the nucleus speckle. The protein resides in the cytoplasm. It catalyses the reaction ATP + H2O = ADP + phosphate + H(+). The ATPase activity is increased some 4-fold in the presence of RNA. Its function is as follows. ATP-dependent RNA helicase. Involved in pre-mRNA splicing as component of the spliceosome. Core component of the splicing-dependent multiprotein exon junction complex (EJC) deposited at splice junctions on mRNAs. The EJC is a dynamic structure consisting of core proteins and several peripheral nuclear and cytoplasmic associated factors that join the complex only transiently either during EJC assembly or during subsequent mRNA metabolism. The EJC marks the position of the exon-exon junction in the mature mRNA for the gene expression machinery and the core components remain bound to spliced mRNAs throughout all stages of mRNA metabolism thereby influencing downstream processes including nuclear mRNA export, subcellular mRNA localization, translation efficiency and nonsense-mediated mRNA decay (NMD). Its RNA-dependent ATPase and RNA-helicase activities are induced by CASC3, but abolished in presence of the MAGOH-RBM8A heterodimer, thereby trapping the ATP-bound EJC core onto spliced mRNA in a stable conformation. The inhibition of ATPase activity by the MAGOH-RBM8A heterodimer increases the RNA-binding affinity of the EJC. Involved in translational enhancement of spliced mRNAs after formation of the 80S ribosome complex. Binds spliced mRNA in sequence-independent manner, 20-24 nucleotides upstream of mRNA exon-exon junctions. Shows higher affinity for single-stranded RNA in an ATP-bound core EJC complex than after the ATP is hydrolyzed. Involved in the splicing modulation of BCL2L1/Bcl-X (and probably other apoptotic genes); specifically inhibits formation of proapoptotic isoforms; the function is different from the established EJC assembly. Involved in craniofacial development. The chain is Eukaryotic initiation factor 4A-III (EIF4A3) from Bos taurus (Bovine).